The following is a 348-amino-acid chain: Hereditary hemochromatosis protein homolog (348 aa).

Positions 1-22 are cleaved as a signal peptide; that stretch reads MGPRARPALFFLILLRTVAAQG. The tract at residues 23–114 is alpha-1; that stretch reads RPPRSHSLRY…IMDNHNHSKE (92 aa). Over 23 to 306 the chain is Extracellular; it reads RPPRSHSLRY…WEPSLSNTLV (284 aa). N-linked (GlcNAc...) asparagine glycans are attached at residues Asn110, Asn130, and Asn234. Positions 115–205 are alpha-2; that stretch reads SHTLQVILGC…ELGRGVLDQQ (91 aa). 2 disulfides stabilise this stretch: Cys124-Cys187 and Cys225-Cys282. An alpha-3 region spans residues 206 to 297; that stretch reads VPPLVKVTHH…GLDQPLTATW (92 aa). The region spanning 207–296 is the Ig-like C1-type domain; the sequence is PPLVKVTHHV…PGLDQPLTAT (90 aa). The connecting peptide stretch occupies residues 298 to 306; sequence EPSLSNTLV. The helical transmembrane segment at 307 to 330 threads the bilayer; the sequence is TGVISGIAVCVIIFFIGILFRILR. At 331-348 the chain is on the cytoplasmic side; it reads KRQASRGAMGDYVLGECE.

The protein belongs to the MHC class I family. Binds TFR through the extracellular domain in a pH-dependent manner.

The protein localises to the cell membrane. In terms of biological role, binds to transferrin receptor (TFR) and reduces its affinity for iron-loaded transferrin. The protein is Hereditary hemochromatosis protein homolog (HFE) of Ceratotherium simum (White rhinoceros).